We begin with the raw amino-acid sequence, 222 residues long: N-(5'-phosphoribosyl)anthranilate isomerase (222 aa).

This sequence belongs to the TrpF family.

It catalyses the reaction N-(5-phospho-beta-D-ribosyl)anthranilate = 1-(2-carboxyphenylamino)-1-deoxy-D-ribulose 5-phosphate. Its pathway is amino-acid biosynthesis; L-tryptophan biosynthesis; L-tryptophan from chorismate: step 3/5. In Rhizobium leguminosarum bv. trifolii (strain WSM2304), this protein is N-(5'-phosphoribosyl)anthranilate isomerase.